The following is an 899-amino-acid chain: Translation initiation factor IF-2 (899 aa).

Disordered stretches follow at residues 116 to 135 (AKAR…ARLQ), 170 to 189 (RGGG…EQKK), and 262 to 306 (DREI…ANKH). The 170-residue stretch at 399–568 (TRPPVVTIMG…LIQSELMELK (170 aa)) folds into the tr-type G domain. The segment at 408–415 (GHVDHGKT) is G1. 408–415 (GHVDHGKT) is a binding site for GTP. Positions 433–437 (GITQH) are G2. The G3 stretch occupies residues 454–457 (DTPG). Residues 454–458 (DTPGH) and 508–511 (NKMD) each bind GTP. The segment at 508 to 511 (NKMD) is G4. A G5 region spans residues 544-546 (SAH).

Belongs to the TRAFAC class translation factor GTPase superfamily. Classic translation factor GTPase family. IF-2 subfamily.

It localises to the cytoplasm. In terms of biological role, one of the essential components for the initiation of protein synthesis. Protects formylmethionyl-tRNA from spontaneous hydrolysis and promotes its binding to the 30S ribosomal subunits. Also involved in the hydrolysis of GTP during the formation of the 70S ribosomal complex. The chain is Translation initiation factor IF-2 from Acinetobacter baumannii (strain AB307-0294).